A 181-amino-acid chain; its full sequence is Sodium/potassium-transporting ATPase subunit beta-1-interacting protein 3 (181 aa).

Helical transmembrane passes span 5–22, 35–55, 62–82, and 151–171; these read TGRCTLIFICTLQMLVAL, APILGNFLHIIVVILGLFGTI, IVAYTIWTAFWVAWNVFIICF, and AVQILLSLIGFVYACYVISVI.

It belongs to the NKAIN family. As to quaternary structure, interacts with atp1b1 C-terminus.

Its subcellular location is the cell membrane. The polypeptide is Sodium/potassium-transporting ATPase subunit beta-1-interacting protein 3 (nkain3) (Xenopus tropicalis (Western clawed frog)).